Here is a 309-residue protein sequence, read N- to C-terminus: Taste receptor type 2 member 43 (309 aa).

A topological domain (extracellular) is located at residue methionine 1. Residues 2–22 form a helical membrane-spanning segment; sequence ITFLPIIFSSLVVVTFVIGNF. Residues 23–46 lie on the Cytoplasmic side of the membrane; it reads ANGFIALVNSIEWFKRQKISFADQ. Residues 47–67 traverse the membrane as a helical segment; sequence ILTALAVSRVGLLWVLLLNWY. Over 68-86 the chain is Extracellular; the sequence is STVLNPAFNSVEVRTTAYN. A helical membrane pass occupies residues 87 to 107; sequence IWAVINHFSNWLATSLSIFYL. At 108-126 the chain is on the cytoplasmic side; that stretch reads LKIANFSNFIFLHLKRRVK. Residues 127–147 form a helical membrane-spanning segment; it reads SVILVMLLGPLLFLACHLFVI. Residues 148–178 are Extracellular-facing; it reads NMNEIVRTKEFEGNMTWKIKLKSAMYFSNMT. N-linked (GlcNAc...) asparagine glycans are attached at residues asparagine 161 and asparagine 176. Residues 179-199 form a helical membrane-spanning segment; it reads VTMVANLVPFTLTLLSFLLLI. Over 200–229 the chain is Cytoplasmic; it reads CSLCKHLKKMQLHGKGSQDPSTKVHIKVLQ. A helical membrane pass occupies residues 230–250; sequence TVISFLLLCAIYFLSIMISVW. Residues 251–259 lie on the Extracellular side of the membrane; it reads SFGSLKNKP. The helical transmembrane segment at 260–280 threads the bilayer; sequence VFMFCKAMRFSYPSIHPFILI. Residues 281–309 are Cytoplasmic-facing; sequence WGNKKLKQTFLSVFWQMRYWVKGEKTSSP.

It belongs to the G-protein coupled receptor T2R family.

It localises to the membrane. Its subcellular location is the cell projection. The protein localises to the cilium membrane. Gustducin-coupled receptor immplicated in the perception of bitter compounds in the oral cavity and the gastrointestinal tract. Signals through PLCB2 and the calcium-regulated cation channel TRPM5. Activated by the sulfonyl amide sweeteners saccharin and acesulfame K. In airway epithelial cells, binding of bitter compounds increases the intracellular calcium ion concentration and stimulates ciliary beat frequency. May act as chemosensory receptors in airway epithelial cells to detect and eliminate potential noxious agents from the airways. The polypeptide is Taste receptor type 2 member 43 (TAS2R43) (Pan troglodytes (Chimpanzee)).